We begin with the raw amino-acid sequence, 422 residues long: Protein phosphatase 1 regulatory subunit 36 (422 aa).

In terms of assembly, interacts with PPP1CA.

Inhibits phosphatase activity of protein phosphatase 1 (PP1) complexes. The polypeptide is Protein phosphatase 1 regulatory subunit 36 (PPP1R36) (Homo sapiens (Human)).